The primary structure comprises 698 residues: Elongation factor G (698 aa).

One can recognise a tr-type G domain in the interval 10–285; that stretch reads DKTRNIGIMA…AVVDYLPSPL (276 aa). Residues 19–26, 83–87, and 137–140 contribute to the GTP site; these read AHIDAGKT, DTPGH, and NKMD.

The protein belongs to the TRAFAC class translation factor GTPase superfamily. Classic translation factor GTPase family. EF-G/EF-2 subfamily.

Its subcellular location is the cytoplasm. Its function is as follows. Catalyzes the GTP-dependent ribosomal translocation step during translation elongation. During this step, the ribosome changes from the pre-translocational (PRE) to the post-translocational (POST) state as the newly formed A-site-bound peptidyl-tRNA and P-site-bound deacylated tRNA move to the P and E sites, respectively. Catalyzes the coordinated movement of the two tRNA molecules, the mRNA and conformational changes in the ribosome. This Lactiplantibacillus plantarum (strain ATCC BAA-793 / NCIMB 8826 / WCFS1) (Lactobacillus plantarum) protein is Elongation factor G.